The chain runs to 31 residues: Ranatuerin-2PL (31 aa).

A disulfide bridge links cysteine 23 with cysteine 29.

Expressed by the skin glands.

The protein localises to the secreted. In terms of biological role, antimicrobial activity against Gram-negative bacterium E.coli. The chain is Ranatuerin-2PL from Lithobates palustris (Pickerel frog).